The following is a 210-amino-acid chain: Pyridoxine/pyridoxamine 5'-phosphate oxidase (210 aa).

Substrate-binding positions include arginine 7–tyrosine 10 and lysine 65. Residues arginine 60–lysine 65, phenylalanine 75–threonine 76, arginine 81, lysine 82, and glutamine 104 contribute to the FMN site. Substrate-binding residues include tyrosine 122, arginine 126, and serine 130. FMN-binding positions include glutamine 139 to serine 140 and tryptophan 183. A substrate-binding site is contributed by arginine 189–histidine 191. Residue arginine 193 participates in FMN binding.

This sequence belongs to the pyridoxamine 5'-phosphate oxidase family. As to quaternary structure, homodimer. FMN is required as a cofactor.

It carries out the reaction pyridoxamine 5'-phosphate + O2 + H2O = pyridoxal 5'-phosphate + H2O2 + NH4(+). The enzyme catalyses pyridoxine 5'-phosphate + O2 = pyridoxal 5'-phosphate + H2O2. It participates in cofactor metabolism; pyridoxal 5'-phosphate salvage; pyridoxal 5'-phosphate from pyridoxamine 5'-phosphate: step 1/1. The protein operates within cofactor metabolism; pyridoxal 5'-phosphate salvage; pyridoxal 5'-phosphate from pyridoxine 5'-phosphate: step 1/1. Its function is as follows. Catalyzes the oxidation of either pyridoxine 5'-phosphate (PNP) or pyridoxamine 5'-phosphate (PMP) into pyridoxal 5'-phosphate (PLP). This chain is Pyridoxine/pyridoxamine 5'-phosphate oxidase, found in Neisseria meningitidis serogroup C (strain 053442).